The sequence spans 49 residues: Large ribosomal subunit protein bL33A (49 aa).

The protein belongs to the bacterial ribosomal protein bL33 family.

This Staphylococcus haemolyticus (strain JCSC1435) protein is Large ribosomal subunit protein bL33A.